Here is a 511-residue protein sequence, read N- to C-terminus: Sorting nexin MVP1 (511 aa).

The tract at residues 1–36 is disordered; the sequence is MDNYEGSDPWNTSSNAWTKDDDHVVSTTNSEPSLNG. The span at 25-36 shows a compositional bias: polar residues; that stretch reads VSTTNSEPSLNG. Positions 128–247 constitute a PX domain; sequence DADIIIIEEI…TFLTVRTDLT (120 aa). Arg172, Ser174, Lys198, and Arg213 together coordinate a 1,2-diacyl-sn-glycero-3-phospho-(1D-myo-inositol-3-phosphate).

The protein belongs to the sorting nexin family. Homodimer. Forms an autoinhibited tetramer consisting of 2 homodimers that self-interact, wherein the membrane-interacting BAR surfaces are sequestered and the PX lipid-binding sites are occluded. Interacts with VPS1.

It localises to the cytoplasm. The protein localises to the endosome membrane. Its function is as follows. Required for vacuolar protein sorting. Component of the retromer-mediated endosome-to-Golgi retrograde pathway. Required for efficient cargo export from the endosome, promoting VPS1-mediated fission of retromer-coated tubules that bud from the endosome. This is Sorting nexin MVP1 (MVP1) from Saccharomyces cerevisiae (strain ATCC 204508 / S288c) (Baker's yeast).